Here is a 2594-residue protein sequence, read N- to C-terminus: Immunoglobulin superfamily member 10 (2594 aa).

Residues 1-25 (MQKRGREVSCLLISLTAICLVVTPG) form the signal peptide. The 28-residue stretch at 29 to 56 (CPRRCACYVPTEVHCTFRYLTSIPDGIP) folds into the LRRNT domain. 6 LRR repeats span residues 58-79 (NVER…DFSG), 82-103 (RLEL…TFSG), 106-127 (SLQV…TLYG), 130-151 (SLTR…AFYG), 154-175 (LLRL…TFVS), and 186-207 (FIKY…MVSS). An LRRCT domain is found at 219 to 281 (NPWTCDCHLK…VPSGSFLCTK (63 aa)). Residue Asn439 is glycosylated (N-linked (GlcNAc...) asparagine). 2 consecutive Ig-like C2-type domains span residues 461-567 (PKAE…YRIT) and 571-661 (PYVE…FQVS). 2 disulfides stabilise this stretch: Cys497–Cys551 and Cys595–Cys645. A glycan (N-linked (GlcNAc...) asparagine) is linked at Asn627. Over residues 670-685 (IEHDRDIDGSGLEEPK) the composition is skewed to basic and acidic residues. Disordered stretches follow at residues 670 to 725 (IEHD…RDLT) and 963 to 1008 (VSSN…GRER). Residues 715-725 (IHKKNKHRDLT) are compositionally biased toward basic residues. A compositionally biased stretch (basic and acidic residues) spans 972-984 (TTKDPGFSKRPSD). The span at 985–1003 (SHTTAPSLFQTPRNNSTGN) shows a compositional bias: polar residues. Asn1044 is a glycosylation site (N-linked (GlcNAc...) asparagine). Disordered stretches follow at residues 1228–1251 (TATK…PSTT), 1333–1364 (VRSK…GYST), and 1428–1457 (SQES…PSPP). A compositionally biased stretch (basic and acidic residues) spans 1333–1342 (VRSKKAKDQT). Residues 1355–1364 (TPRQISGYST) are compositionally biased toward polar residues. Ig-like C2-type domains follow at residues 1619–1710 (PRII…VTLS), 1715–1807 (PARI…VKIQ), 1812–1901 (PPVI…RRVV), 1912–2005 (PRIE…VRLR), 2008–2106 (PAKI…VHLT), 2112–2200 (PRIR…YKLD), 2205–2302 (PPLI…LKVL), 2308–2398 (PTFR…ILLE), 2403–2493 (PVIL…VPVT), and 2499–2592 (PRII…TYIQ). Disulfide bonds link Cys1641/Cys1694, Cys1738/Cys1791, and Cys1835/Cys1888. Residues 1658 to 1681 (SGREISRGIQKTRFHVLPNGTLSI) form an LRR 11 repeat. N-linked (GlcNAc...) asparagine glycosylation is found at Asn1676, Asn1780, Asn1870, and Asn1933. Disulfide bonds link Cys1934–Cys1987, Cys2031–Cys2090, Cys2134–Cys2184, Cys2232–Cys2284, Cys2330–Cys2382, Cys2425–Cys2477, and Cys2521–Cys2576. A glycan (N-linked (GlcNAc...) asparagine) is linked at Asn2072. N-linked (GlcNAc...) asparagine glycosylation occurs at Asn2364. Tyr2574 carries the post-translational modification Phosphotyrosine.

As to expression, in the embryo, expressed in the nasal mesenchyme.

The protein localises to the secreted. In terms of biological role, involved in the control of early migration of neurons expressing gonadotropin-releasing hormone (GNRH neurons). May be involved in the maintenance of osteochondroprogenitor cells pool. This Mus musculus (Mouse) protein is Immunoglobulin superfamily member 10 (Igsf10).